The primary structure comprises 343 residues: Hydroxymethylglutaryl-CoA synthase (343 aa).

(3S)-3-hydroxy-3-methylglutaryl-CoA-binding residues include Asp28 and Ala29. The active-site Proton donor/acceptor is Glu80. Cys112 lines the (3S)-3-hydroxy-3-methylglutaryl-CoA pocket. The active-site Acyl-thioester intermediate is Cys112. Arg198 serves as a coordination point for CoA. The (3S)-3-hydroxy-3-methylglutaryl-CoA site is built by Thr200 and His233. Residue His233 is the Proton donor/acceptor of the active site. Lys238 contributes to the CoA binding site. (3S)-3-hydroxy-3-methylglutaryl-CoA contacts are provided by Arg242, Asn265, and Ser295.

Belongs to the thiolase-like superfamily. Archaeal HMG-CoA synthase family. In terms of assembly, interacts with acetoacetyl-CoA thiolase that catalyzes the precedent step in the pathway and with a DUF35 protein. The acetoacetyl-CoA thiolase/HMG-CoA synthase complex channels the intermediate via a fused CoA-binding site, which allows for efficient coupling of the endergonic thiolase reaction with the exergonic HMGCS reaction.

The enzyme catalyses acetoacetyl-CoA + acetyl-CoA + H2O = (3S)-3-hydroxy-3-methylglutaryl-CoA + CoA + H(+). It participates in metabolic intermediate biosynthesis; (R)-mevalonate biosynthesis; (R)-mevalonate from acetyl-CoA: step 2/3. In terms of biological role, catalyzes the condensation of acetyl-CoA with acetoacetyl-CoA to form 3-hydroxy-3-methylglutaryl-CoA (HMG-CoA). Functions in the mevalonate (MVA) pathway leading to isopentenyl diphosphate (IPP), a key precursor for the biosynthesis of isoprenoid compounds that are building blocks of archaeal membrane lipids. The sequence is that of Hydroxymethylglutaryl-CoA synthase from Archaeoglobus fulgidus (strain ATCC 49558 / DSM 4304 / JCM 9628 / NBRC 100126 / VC-16).